The chain runs to 544 residues: CTP synthase (544 aa).

The segment at Met1 to Leu265 is amidoligase domain. Position 13 (Ser13) interacts with CTP. Residue Ser13 participates in UTP binding. ATP-binding positions include Ser14–Ile19 and Asp71. Residues Asp71 and Glu139 each contribute to the Mg(2+) site. Residues Asp146 to Glu148, Lys186 to Gln191, and Lys222 each bind CTP. UTP contacts are provided by residues Lys186–Gln191 and Lys222. Positions Lys290–Ala544 constitute a Glutamine amidotransferase type-1 domain. Gly353 lines the L-glutamine pocket. Residue Cys380 is the Nucleophile; for glutamine hydrolysis of the active site. Residues Leu381–Gln384, Glu404, and Arg471 contribute to the L-glutamine site. Catalysis depends on residues His517 and Glu519.

It belongs to the CTP synthase family. In terms of assembly, homotetramer.

It carries out the reaction UTP + L-glutamine + ATP + H2O = CTP + L-glutamate + ADP + phosphate + 2 H(+). The enzyme catalyses L-glutamine + H2O = L-glutamate + NH4(+). The catalysed reaction is UTP + NH4(+) + ATP = CTP + ADP + phosphate + 2 H(+). It participates in pyrimidine metabolism; CTP biosynthesis via de novo pathway; CTP from UDP: step 2/2. Its activity is regulated as follows. Allosterically activated by GTP, when glutamine is the substrate; GTP has no effect on the reaction when ammonia is the substrate. The allosteric effector GTP functions by stabilizing the protein conformation that binds the tetrahedral intermediate(s) formed during glutamine hydrolysis. Inhibited by the product CTP, via allosteric rather than competitive inhibition. Functionally, catalyzes the ATP-dependent amination of UTP to CTP with either L-glutamine or ammonia as the source of nitrogen. Regulates intracellular CTP levels through interactions with the four ribonucleotide triphosphates. This chain is CTP synthase, found in Neisseria meningitidis serogroup B (strain ATCC BAA-335 / MC58).